The chain runs to 266 residues: MPQVTMRQMLEAGVHFGHQTRYRHPKMSPNIFGARGKIHIINLEKTVPLFNDAMNFLSAVAQKRGSVLFVGTKRSARDAIKEEAERCGMPYMIQRWLGGTLTNFRTVKQSVARLKELELAETDGTFSKLVKHEVLRLRRESGKLQASLGGIKDMNRIPDAIFVIDIGHEDIAIKEAKKLGIPVVAVVDTNYDPSLVDYPIPGNDDAIRAVQLYARAAADAVLEGKAAMPNAVAVREEEFASAPDAGKKGRQAQPKKGKRASDAAAE.

The interval E238–E266 is disordered. Positions K248–K258 are enriched in basic residues.

The protein belongs to the universal ribosomal protein uS2 family.

This is Small ribosomal subunit protein uS2 from Xylella fastidiosa (strain M12).